The chain runs to 221 residues: 7-cyano-7-deazaguanine synthase (221 aa).

7–17 (LSGGMDSSTLA) serves as a coordination point for ATP. Zn(2+) contacts are provided by C187, C195, C198, and C201.

The protein belongs to the QueC family. Requires Zn(2+) as cofactor.

The catalysed reaction is 7-carboxy-7-deazaguanine + NH4(+) + ATP = 7-cyano-7-deazaguanine + ADP + phosphate + H2O + H(+). The protein operates within purine metabolism; 7-cyano-7-deazaguanine biosynthesis. Functionally, catalyzes the ATP-dependent conversion of 7-carboxy-7-deazaguanine (CDG) to 7-cyano-7-deazaguanine (preQ(0)). The chain is 7-cyano-7-deazaguanine synthase from Methanosphaerula palustris (strain ATCC BAA-1556 / DSM 19958 / E1-9c).